A 784-amino-acid chain; its full sequence is Toll-like receptor 2 (784 aa).

The N-terminal stretch at 1–20 (MPRALWTAWVWAVIILSMEG) is a signal peptide. At 21–587 (ASHQASSLSC…ARLSLSECHR (567 aa)) the chain is on the extracellular side. A disulfide bond links C30 and C36. LRR repeat units lie at residues 54-77 (VKSLDLSNNEITYVSNRDLQRCVN), 78-101 (LKTLRLGANEIHTVEEDSFFHLRN), 102-125 (LEYLDLSYNRLSNLSSSWFRSLYA), 126-150 (LKFLNLLGNVYKTLGETSLFSHLPN), 151-175 (LRTLKVGNSNSFTEIHEKDFTGLIF), 176-199 (LEELEISAQNLQIYVPKSLKSIQN), 200-223 (ISHLILHLKQPVLLVDILVDIVSS), 224-250 (LDCLELRDTNLHTFHFSEASISEMNTS), 251-278 (VKKLIFRNVQFTDESFVEVVKLFNYVSG), 279-308 (ILEVEFDDCTHDGIGDFRALSLDRIRHLGN), 309-337 (VETLTIRKLHIPQFFLFHDLSSIYPLTGK), 338-361 (VKRVTIESSKVFLVPCLLSQHLKS), 362-388 (LEYLDLSENLMSEETLKNSACKDAWPF), 389-414 (LQTLVLRQNRLKSLEKTGELLLTLEN), 415-437 (LNNLDISKNNFLSMPETCRWPGK), 438-457 (MKQLNLSSTRVHSLTQCLPQ), 458-478 (TLEILDVSNNNLDSFSLILPQ), 479-500 (LKELYISRNKLKTLPDASFLPV), and 501-524 (LSVMRISRNIINTFSKEQLDSFQQ). A glycan (N-linked (GlcNAc...) asparagine) is linked at N114. N-linked (GlcNAc...) asparagine glycosylation is present at N199. N248 carries an N-linked (GlcNAc...) asparagine glycan. An intrachain disulfide couples C353 to C382. A disulfide bond links C432 and C454. N442 carries N-linked (GlcNAc...) asparagine glycosylation. Residues 525-579 (LKTLEAGGNNFICSCDFLSFTQGQQALGRVLVDWPAEYRCDSPSHVRGQRVQDAR) form the LRRCT domain. Residues 588–608 (AAVVSAACCALFLLLLLTGVL) traverse the membrane as a helical segment. Residues 609–784 (CHRFHGLWYM…WLNLRAAIRS (176 aa)) lie on the Cytoplasmic side of the membrane. The TIR domain maps to 639-782 (ICYDAFVSYS…GFWLNLRAAI (144 aa)). Residue K754 forms a Glycyl lysine isopeptide (Lys-Gly) (interchain with G-Cter in ubiquitin) linkage. Positions 761–778 (YLEWPVDETQQEGFWLNL) match the ATG16L1-binding motif motif.

Belongs to the Toll-like receptor family. As to quaternary structure, interacts with LY96, TLR1 and TLR6 (via extracellular domain). TLR2 seems to exist in heterodimers with either TLR1 or TLR6 before stimulation by the ligand. The heterodimers form bigger oligomers in response to their corresponding ligands as well as further heterotypic associations with other receptors such as CD14 and/or CD36. Binds MYD88 (via TIR domain). Interacts with TICAM1. Interacts with CNPY3. Interacts with ATG16L1. Interacts with PPP1R11. Interacts with TICAM2. Interacts with TIRAP. In terms of processing, ubiquitinated at Lys-754 by PPP1R11, leading to its degradation. Deubiquitinated by USP2. Post-translationally, glycosylation of Asn-442 is critical for secretion of the N-terminal ectodomain of TLR2.

The protein localises to the membrane. The protein resides in the cytoplasmic vesicle. Its subcellular location is the phagosome membrane. It localises to the membrane raft. In terms of biological role, cooperates with LY96 to mediate the innate immune response to bacterial lipoproteins and other microbial cell wall components. Cooperates with TLR1 or TLR6 to mediate the innate immune response to bacterial lipoproteins or lipopeptides. Acts via MYD88 and TRAF6, leading to NF-kappa-B activation, cytokine secretion and the inflammatory response. May also promote apoptosis in response to lipoproteins. Forms activation clusters composed of several receptors depending on the ligand, these clusters trigger signaling from the cell surface and subsequently are targeted to the Golgi in a lipid-raft dependent pathway. Forms the cluster TLR2:TLR6:CD14:CD36 in response to diacylated lipopeptides and TLR2:TLR1:CD14 in response to triacylated lipopeptides. The sequence is that of Toll-like receptor 2 (TLR2) from Bubalus bubalis (Domestic water buffalo).